A 481-amino-acid chain; its full sequence is Bindin (481 aa).

An N-terminal signal peptide occupies residues 1–20; sequence MGFHQILVTVVALALASVRA. The propeptide occupies 21–245; it reads EFPSRTDSPT…DSKRGARKKR (225 aa). Composition is skewed to basic and acidic residues over residues 154-163 and 178-189; these read DGDLRKRRES and RKGDEPAGHTLK. Disordered stretches follow at residues 154 to 193 and 219 to 243; these read DGDL…DLAP and GHSP…GARK. The tract at residues 352 to 360 is fucose-binding domain; sequence LRHLRHHSN. The tract at residues 376–481 is disordered; that stretch reads SAMQEEEEEE…QPYGQGYLQG (106 aa). Over residues 379-389 the composition is skewed to acidic residues; it reads QEEEEEEEEDA. The span at 406–416 shows a compositional bias: gly residues; sequence AGFGGGGGGGA. Low complexity-rich tracts occupy residues 417-440 and 464-481; these read MMSP…MGFP and GMGM…YLQG.

It belongs to the bindin family.

It is found in the cytoplasmic vesicle. It localises to the secretory vesicle. The protein localises to the acrosome lumen. In terms of biological role, species-specific sea urchin sperm protein required for adhesion of sperm to the egg surface during fertilization. Bindin coats the acrosomal process after it is externalized by the acrosome reaction. It binds to sulfated, fucose-containing polysaccharides on the vitelline layer receptor proteoglycans which cover the egg plasma membrane. This is Bindin from Strongylocentrotus purpuratus (Purple sea urchin).